A 499-amino-acid polypeptide reads, in one-letter code: Phenylalanine--tRNA ligase alpha subunit (499 aa).

Residues Thr330, Gln372–Glu374, and Tyr412 each bind L-phenylalanine. Glu414 contacts Mg(2+). Residue Phe438 coordinates L-phenylalanine.

It belongs to the class-II aminoacyl-tRNA synthetase family. Phe-tRNA synthetase alpha subunit type 2 subfamily. In terms of assembly, tetramer of two alpha and two beta subunits. Mg(2+) serves as cofactor.

It is found in the cytoplasm. It catalyses the reaction tRNA(Phe) + L-phenylalanine + ATP = L-phenylalanyl-tRNA(Phe) + AMP + diphosphate + H(+). This Schizosaccharomyces pombe (strain 972 / ATCC 24843) (Fission yeast) protein is Phenylalanine--tRNA ligase alpha subunit (frs2).